We begin with the raw amino-acid sequence, 261 residues long: Undecaprenyl-diphosphatase (261 aa).

The next 8 membrane-spanning stretches (helical) occupy residues 1 to 21 (MNYI…FLPV), 41 to 61 (FTKL…VVLY), 69 to 89 (LDFY…GLLF), 95 to 115 (ALLE…IILL), 129 to 149 (ITYL…IPGV), 169 to 186 (AAEF…GATL), 206 to 226 (ILII…KTFI), and 241 to 261 (RIVA…LTLI).

It belongs to the UppP family.

Its subcellular location is the cell inner membrane. It catalyses the reaction di-trans,octa-cis-undecaprenyl diphosphate + H2O = di-trans,octa-cis-undecaprenyl phosphate + phosphate + H(+). Functionally, catalyzes the dephosphorylation of undecaprenyl diphosphate (UPP). Confers resistance to bacitracin. This is Undecaprenyl-diphosphatase from Flavobacterium psychrophilum (strain ATCC 49511 / DSM 21280 / CIP 103535 / JIP02/86).